A 425-amino-acid polypeptide reads, in one-letter code: Alpha-muurolene synthase (425 aa).

5 residues coordinate Mg(2+): Asp97, Asp101, Asn240, Ser244, and Glu248. Residues 97 to 101 carry the DDXXD motif motif; it reads DNISD. Residues 348–382 form a disordered region; it reads VAPPPPPPPPTPPPQSSDADTKKQKVKAQDGKGPV. Residues 349–362 are compositionally biased toward pro residues; the sequence is APPPPPPPPTPPPQ. Basic and acidic residues predominate over residues 366–377; sequence ADTKKQKVKAQD.

Belongs to the terpene synthase family. Mg(2+) is required as a cofactor.

The catalysed reaction is (2E,6E)-farnesyl diphosphate = alpha-muurolene + diphosphate. The enzyme catalyses (2E,6E)-farnesyl diphosphate = gamma-muurolene + diphosphate. It catalyses the reaction (2E,6E)-farnesyl diphosphate = (+)-(R)-germacrene A + diphosphate. Functionally, sesquiterpene synthase that catalyzes the formation of alpha-muurolene, and at lower level (+)-(R)-germacrene A and gamma-muurolene. This chain is Alpha-muurolene synthase (COP3), found in Coprinopsis cinerea (strain Okayama-7 / 130 / ATCC MYA-4618 / FGSC 9003) (Inky cap fungus).